The sequence spans 262 residues: Acyl-[acyl-carrier-protein]--UDP-N-acetylglucosamine O-acyltransferase (262 aa).

The protein belongs to the transferase hexapeptide repeat family. LpxA subfamily. In terms of assembly, homotrimer.

The protein localises to the cytoplasm. The catalysed reaction is a (3R)-hydroxyacyl-[ACP] + UDP-N-acetyl-alpha-D-glucosamine = a UDP-3-O-[(3R)-3-hydroxyacyl]-N-acetyl-alpha-D-glucosamine + holo-[ACP]. The protein operates within glycolipid biosynthesis; lipid IV(A) biosynthesis; lipid IV(A) from (3R)-3-hydroxytetradecanoyl-[acyl-carrier-protein] and UDP-N-acetyl-alpha-D-glucosamine: step 1/6. Involved in the biosynthesis of lipid A, a phosphorylated glycolipid that anchors the lipopolysaccharide to the outer membrane of the cell. This is Acyl-[acyl-carrier-protein]--UDP-N-acetylglucosamine O-acyltransferase from Haemophilus influenzae (strain ATCC 51907 / DSM 11121 / KW20 / Rd).